Reading from the N-terminus, the 51-residue chain is Small polypeptide DEVIL 1 (51 aa).

The disordered stretch occupies residues 1–25 (MEMKRVMMSSAERSKEKKRSISRRL). Residues 16 to 25 (EKKRSISRRL) show a composition bias toward basic residues. Positions 20-51 (SISRRLGKYMKEQKGRIYIIRRCMVMLLCSHD) are required for DVL/RTFL small polypeptide activity. The chain crosses the membrane as a helical span at residues 28–44 (YMKEQKGRIYIIRRCMV).

Belongs to the DVL/RTFL small polypeptides family. Mostly expressed in leaves and, to a lower extent, in roots and stems.

The protein localises to the cell membrane. Its function is as follows. Small polypeptide acting as a regulatory molecule which coordinates cellular responses required for differentiation, growth and development, including leaves shape, pedicule elongation, inflorescence organization and fruit maturation, probably by restricting polar cell proliferation in lateral organs and coordinating socket cell recruitment and differentiation at trichome sites. This chain is Small polypeptide DEVIL 1, found in Arabidopsis thaliana (Mouse-ear cress).